The primary structure comprises 432 residues: Phosphomethylpyrimidine synthase (432 aa).

Substrate-binding positions include N66, M95, Y124, H163, S185–G187, D226–R229, and E265. Residue H269 coordinates Zn(2+). Y292 contacts substrate. H333 is a binding site for Zn(2+). 3 residues coordinate [4Fe-4S] cluster: C409, C412, and C416.

The protein belongs to the ThiC family. [4Fe-4S] cluster is required as a cofactor.

It carries out the reaction 5-amino-1-(5-phospho-beta-D-ribosyl)imidazole + S-adenosyl-L-methionine = 4-amino-2-methyl-5-(phosphooxymethyl)pyrimidine + CO + 5'-deoxyadenosine + formate + L-methionine + 3 H(+). The protein operates within cofactor biosynthesis; thiamine diphosphate biosynthesis. Functionally, catalyzes the synthesis of the hydroxymethylpyrimidine phosphate (HMP-P) moiety of thiamine from aminoimidazole ribotide (AIR) in a radical S-adenosyl-L-methionine (SAM)-dependent reaction. This chain is Phosphomethylpyrimidine synthase, found in Caldanaerobacter subterraneus subsp. tengcongensis (strain DSM 15242 / JCM 11007 / NBRC 100824 / MB4) (Thermoanaerobacter tengcongensis).